Reading from the N-terminus, the 286-residue chain is Probable ketoamine kinase YniA (286 aa).

Position 91–93 (91–93 (DYL)) interacts with ATP. The Proton acceptor role is filled by D193.

It belongs to the fructosamine kinase family.

In terms of biological role, ketoamine kinase that phosphorylates ketoamines on the third carbon of the sugar moiety to generate ketoamine 3-phosphate. Its precise substrate are unknown: does not have ribulosamine and/or erythrulosamine 3-kinase activity in vitro. This chain is Probable ketoamine kinase YniA (yniA), found in Escherichia coli (strain K12).